We begin with the raw amino-acid sequence, 468 residues long: Protein C-ets-2 (468 aa).

The PNT domain occupies 85 to 170 (ATFSGFQKEQ…EHLEQMIKEN (86 aa)). 2 positions are modified to phosphoserine: Ser-220 and Ser-225. The disordered stretch occupies residues 262-290 (VNLLNNNSGKPKDHDSPENGGDSFESSDS). Residues Ser-294, Ser-297, and Ser-300 each carry the phosphoserine modification. The segment at residues 362–442 (IQLWQFLLEL…SGKRYVYRFV (81 aa)) is a DNA-binding region (ETS).

It belongs to the ETS family. Post-translationally, phosphorylation by CDK10 at Ser-220 and Ser-225 creates a phosphodegron that targets ETS2 for proteasomal degradation.

It localises to the nucleus. Its function is as follows. Transcription factor activating transcription. Binds specifically the GGA DNA motif in gene promoters and stimulates transcription of those genes. In Mus musculus (Mouse), this protein is Protein C-ets-2 (Ets2).